Here is a 500-residue protein sequence, read N- to C-terminus: L-arabinose isomerase (500 aa).

Glutamate 306, glutamate 333, histidine 350, and histidine 450 together coordinate Mn(2+).

It belongs to the arabinose isomerase family. Homohexamer. Requires Mn(2+) as cofactor.

It catalyses the reaction beta-L-arabinopyranose = L-ribulose. Its pathway is carbohydrate degradation; L-arabinose degradation via L-ribulose; D-xylulose 5-phosphate from L-arabinose (bacterial route): step 1/3. Functionally, catalyzes the conversion of L-arabinose to L-ribulose. In Salmonella arizonae (strain ATCC BAA-731 / CDC346-86 / RSK2980), this protein is L-arabinose isomerase.